The chain runs to 238 residues: Phosphoribosylaminoimidazole-succinocarboxamide synthase (238 aa).

The protein belongs to the SAICAR synthetase family.

It catalyses the reaction 5-amino-1-(5-phospho-D-ribosyl)imidazole-4-carboxylate + L-aspartate + ATP = (2S)-2-[5-amino-1-(5-phospho-beta-D-ribosyl)imidazole-4-carboxamido]succinate + ADP + phosphate + 2 H(+). The protein operates within purine metabolism; IMP biosynthesis via de novo pathway; 5-amino-1-(5-phospho-D-ribosyl)imidazole-4-carboxamide from 5-amino-1-(5-phospho-D-ribosyl)imidazole-4-carboxylate: step 1/2. The polypeptide is Phosphoribosylaminoimidazole-succinocarboxamide synthase (Marinomonas sp. (strain MWYL1)).